Reading from the N-terminus, the 186-residue chain is Peptidyl-tRNA hydrolase (186 aa).

Tyr-16 provides a ligand contact to tRNA. Catalysis depends on His-21, which acts as the Proton acceptor. TRNA-binding residues include Tyr-60 and Asn-62.

The protein belongs to the PTH family. As to quaternary structure, monomer.

Its subcellular location is the cytoplasm. The catalysed reaction is an N-acyl-L-alpha-aminoacyl-tRNA + H2O = an N-acyl-L-amino acid + a tRNA + H(+). In terms of biological role, hydrolyzes ribosome-free peptidyl-tRNAs (with 1 or more amino acids incorporated), which drop off the ribosome during protein synthesis, or as a result of ribosome stalling. Functionally, catalyzes the release of premature peptidyl moieties from peptidyl-tRNA molecules trapped in stalled 50S ribosomal subunits, and thus maintains levels of free tRNAs and 50S ribosomes. This chain is Peptidyl-tRNA hydrolase, found in Tropheryma whipplei (strain TW08/27) (Whipple's bacillus).